Reading from the N-terminus, the 603-residue chain is NAD 5'-nucleotidase (603 aa).

The N-terminal stretch at 1-25 (MLLSKKSASFALSAFAMLFTSVALA) is a signal peptide. Zn(2+)-binding residues include aspartate 44, histidine 46, aspartate 94, asparagine 126, and histidine 227. Substrate-binding positions include arginine 397, arginine 437, phenylalanine 456, and 540 to 546 (YVAGGKD).

Belongs to the 5'-nucleotidase family. Zn(2+) is required as a cofactor.

It localises to the periplasm. It catalyses the reaction a ribonucleoside 5'-phosphate + H2O = a ribonucleoside + phosphate. Degrades NAD into adenosine and nicotinamide riboside, the latter being subsequently internalized by a specific permease. Also endowed with NAD(P) pyrophosphatase activity. Exhibits a broad substrate specificity, recognizing either mono- or dinucleotide nicotinamides and different adenosine phosphates with a maximal activity on 5'-adenosine monophosphate. The sequence is that of NAD 5'-nucleotidase from Haemophilus influenzae (strain ATCC 51907 / DSM 11121 / KW20 / Rd).